The following is a 571-amino-acid chain: Proline--tRNA ligase (571 aa).

This sequence belongs to the class-II aminoacyl-tRNA synthetase family. ProS type 1 subfamily. Homodimer.

The protein localises to the cytoplasm. The catalysed reaction is tRNA(Pro) + L-proline + ATP = L-prolyl-tRNA(Pro) + AMP + diphosphate. Functionally, catalyzes the attachment of proline to tRNA(Pro) in a two-step reaction: proline is first activated by ATP to form Pro-AMP and then transferred to the acceptor end of tRNA(Pro). As ProRS can inadvertently accommodate and process non-cognate amino acids such as alanine and cysteine, to avoid such errors it has two additional distinct editing activities against alanine. One activity is designated as 'pretransfer' editing and involves the tRNA(Pro)-independent hydrolysis of activated Ala-AMP. The other activity is designated 'posttransfer' editing and involves deacylation of mischarged Ala-tRNA(Pro). The misacylated Cys-tRNA(Pro) is not edited by ProRS. The chain is Proline--tRNA ligase from Azotobacter vinelandii (strain DJ / ATCC BAA-1303).